Here is a 218-residue protein sequence, read N- to C-terminus: Type II restriction enzyme KpnI (218 aa).

The enzyme catalyses Endonucleolytic cleavage of DNA to give specific double-stranded fragments with terminal 5'-phosphates.. Its function is as follows. A P subtype restriction enzyme that recognizes the double-stranded sequence 5'-GGTACC-3' and cleaves after C-5. The polypeptide is Type II restriction enzyme KpnI (Klebsiella pneumoniae).